A 1228-amino-acid polypeptide reads, in one-letter code: Apical endosomal glycoprotein (1228 aa).

Positions 1-21 (MCLPSHLLSTWVLFMAAQSLG) are cleaved as a signal peptide. Topologically, residues 23 to 1159 (TWLPNHCRSP…GEVAAPVSVP (1137 aa)) are extracellular. Residues 28-49 (HCRSPIKAVCNFVCDCGDCSDE) enclose the LDL-receptor class A 1; truncated domain. An MAM 1 domain is found at 65–223 (FTCNFEQDSC…DDVEFRDCGL (159 aa)). Asn204 is a glycosylation site (N-linked (GlcNAc...) asparagine). The LDL-receptor class A 2 domain maps to 229–267 (RCPLGHHHCQNKACVEPHQLCDGEDNCGDRSDEDPLICS). 3 cysteine pairs are disulfide-bonded: Cys230–Cys242, Cys237–Cys255, and Cys249–Cys266. Residues 270-426 (MATDFETGLG…DLIMSSHCML (157 aa)) enclose the MAM 2 domain. Residues Asn290 and Asn340 are each glycosylated (N-linked (GlcNAc...) asparagine). One can recognise an LDL-receptor class A 3 domain in the interval 457 to 492 (TCEPGHLSCGDLCVPPEQLCDFQKHCAEGEDEHKCG). 3 disulfides stabilise this stretch: Cys458–Cys469, Cys465–Cys482, and Cys476–Cys491. 4 MAM domains span residues 492 to 649 (GTTD…DCNP), 659 to 815 (LSCN…PCWA), 817 to 975 (KSCS…PCPQ), and 977 to 1144 (GSCD…QCKQ). A glycan (N-linked (GlcNAc...) asparagine) is linked at Asn641. Asn841 carries an N-linked (GlcNAc...) asparagine glycan. A helical transmembrane segment spans residues 1160–1180 (VAVGGALLFFMFLVLMGLGGW). Over 1181-1228 (HWLQKQHCPGQRSTDAAASGFANILFNADHVTLPESITSNPQSPPDLA) the chain is Cytoplasmic.

The protein resides in the membrane. Probably involved in the sorting and selective transport of receptors and ligands across polarized epithelia. The protein is Apical endosomal glycoprotein of Mus musculus (Mouse).